Consider the following 138-residue polypeptide: MRTLGLDLGTKTLGVAVSDELGLTAQGLETIAIDTERGDYGLKRLRAIIDEYGVDTIVVGWPKNMNGTLGPRAEASERFAAKLREEFSLPVVLWDERLSTMAAERMLIAADVSRKKRRKVIDKMAAAVILQSYLDSKR.

It belongs to the YqgF nuclease family.

It localises to the cytoplasm. Functionally, could be a nuclease involved in processing of the 5'-end of pre-16S rRNA. This is Putative pre-16S rRNA nuclease from Geobacillus kaustophilus (strain HTA426).